The primary structure comprises 131 residues: Large ribosomal subunit protein bL21 (131 aa).

It belongs to the bacterial ribosomal protein bL21 family. As to quaternary structure, part of the 50S ribosomal subunit. Contacts protein L20.

This protein binds to 23S rRNA in the presence of protein L20. This chain is Large ribosomal subunit protein bL21, found in Cereibacter sphaeroides (strain ATCC 17023 / DSM 158 / JCM 6121 / CCUG 31486 / LMG 2827 / NBRC 12203 / NCIMB 8253 / ATH 2.4.1.) (Rhodobacter sphaeroides).